The sequence spans 145 residues: 3-hydroxyacyl-[acyl-carrier-protein] dehydratase FabZ (145 aa).

The active site involves His-49.

It belongs to the thioester dehydratase family. FabZ subfamily.

It is found in the cytoplasm. It carries out the reaction a (3R)-hydroxyacyl-[ACP] = a (2E)-enoyl-[ACP] + H2O. Involved in unsaturated fatty acids biosynthesis. Catalyzes the dehydration of short chain beta-hydroxyacyl-ACPs and long chain saturated and unsaturated beta-hydroxyacyl-ACPs. The chain is 3-hydroxyacyl-[acyl-carrier-protein] dehydratase FabZ from Rickettsia bellii (strain RML369-C).